A 571-amino-acid polypeptide reads, in one-letter code: Glutamate--tRNA ligase (571 aa).

The short motif at 110–120 (PNPNGPATLGS) is the 'HIGH' region element.

The protein belongs to the class-I aminoacyl-tRNA synthetase family. Glutamate--tRNA ligase type 2 subfamily.

It localises to the cytoplasm. It carries out the reaction tRNA(Glu) + L-glutamate + ATP = L-glutamyl-tRNA(Glu) + AMP + diphosphate. Catalyzes the attachment of glutamate to tRNA(Glu) in a two-step reaction: glutamate is first activated by ATP to form Glu-AMP and then transferred to the acceptor end of tRNA(Glu). This chain is Glutamate--tRNA ligase, found in Methanosarcina mazei (strain ATCC BAA-159 / DSM 3647 / Goe1 / Go1 / JCM 11833 / OCM 88) (Methanosarcina frisia).